Consider the following 384-residue polypeptide: 23S rRNA (uracil(747)-C(5))-methyltransferase RlmC (384 aa).

Residues Cys7, Cys15, Cys18, and Cys94 each contribute to the [4Fe-4S] cluster site. The S-adenosyl-L-methionine site is built by Gln219, Phe248, Glu269, and Asn316. The Nucleophile role is filled by Cys343.

This sequence belongs to the class I-like SAM-binding methyltransferase superfamily. RNA M5U methyltransferase family. RlmC subfamily.

It catalyses the reaction uridine(747) in 23S rRNA + S-adenosyl-L-methionine = 5-methyluridine(747) in 23S rRNA + S-adenosyl-L-homocysteine + H(+). Catalyzes the formation of 5-methyl-uridine at position 747 (m5U747) in 23S rRNA. The protein is 23S rRNA (uracil(747)-C(5))-methyltransferase RlmC of Shewanella sp. (strain ANA-3).